The sequence spans 887 residues: Chaperone protein ClpB 2 (887 aa).

A Clp R domain is found at Pro6–Ala147. 2 repeat regions span residues Phe9–Gln73 and Cys84–Ala147. The tract at residues Ala160–Gln342 is NBD1. An ATP-binding site is contributed by Gly207 to Thr214. Residues Pro343–Gly559 form a linker region. Positions Ile393–Ala535 form a coiled coil. Residues Glu569–Gly780 are NBD2. Gly619 to Thr626 is a binding site for ATP. A C-terminal region spans residues Leu781–Ser887.

The protein belongs to the ClpA/ClpB family. Homohexamer. The oligomerization is ATP-dependent.

The protein resides in the cytoplasm. Its function is as follows. Part of a stress-induced multi-chaperone system, it is involved in the recovery of the cell from heat-induced damage, in cooperation with DnaK, DnaJ and GrpE. Acts before DnaK, in the processing of protein aggregates. Protein binding stimulates the ATPase activity; ATP hydrolysis unfolds the denatured protein aggregates, which probably helps expose new hydrophobic binding sites on the surface of ClpB-bound aggregates, contributing to the solubilization and refolding of denatured protein aggregates by DnaK. This is Chaperone protein ClpB 2 (clpB2) from Thermosynechococcus vestitus (strain NIES-2133 / IAM M-273 / BP-1).